Consider the following 556-residue polypeptide: Serine beta-lactamase-like protein LACTB, mitochondrial (556 aa).

Residues 1–117 constitute a mitochondrion transit peptide; that stretch reads MYRLLSAVMA…RAIDSSRDLL (117 aa). Catalysis depends on Ser-166, which acts as the Acyl-ester intermediate. Basic and acidic residues predominate over residues 249-282; the sequence is ESDQEKELKEKGGKSNEKNDFAKAKVEQDNETKG. A disordered region spans residues 249 to 290; sequence ESDQEKELKEKGGKSNEKNDFAKAKVEQDNETKGRNSKPCKK. N6-succinyllysine is present on residues Lys-290 and Lys-291. Residues Lys-304 and Lys-349 each carry the N6-acetyllysine modification.

This sequence belongs to the peptidase S12 family.

It localises to the mitochondrion. Mitochondrial serine protease that acts as a regulator of mitochondrial lipid metabolism. Acts by decreasing protein levels of PISD, a mitochondrial enzyme that converts phosphatidylserine (PtdSer) to phosphatidylethanolamine (PtdEtn), thereby affecting mitochondrial lipid metabolism. It is unclear whether it acts directly by mediating proteolysis of PISD or by mediating proteolysis of another lipid metabolism protein. In Bos taurus (Bovine), this protein is Serine beta-lactamase-like protein LACTB, mitochondrial.